The sequence spans 700 residues: Elongation factor G (700 aa).

Residues 8-290 (ERYRNIGISA…AVVEYLPSPV (283 aa)) enclose the tr-type G domain. Residues 17–24 (AHIDAGKT), 88–92 (DTPGH), and 142–145 (NKMD) each bind GTP.

Belongs to the TRAFAC class translation factor GTPase superfamily. Classic translation factor GTPase family. EF-G/EF-2 subfamily.

Its subcellular location is the cytoplasm. Catalyzes the GTP-dependent ribosomal translocation step during translation elongation. During this step, the ribosome changes from the pre-translocational (PRE) to the post-translocational (POST) state as the newly formed A-site-bound peptidyl-tRNA and P-site-bound deacylated tRNA move to the P and E sites, respectively. Catalyzes the coordinated movement of the two tRNA molecules, the mRNA and conformational changes in the ribosome. The sequence is that of Elongation factor G from Mannheimia succiniciproducens (strain KCTC 0769BP / MBEL55E).